Consider the following 233-residue polypeptide: ATP synthase subunit a (233 aa).

Transmembrane regions (helical) follow at residues 29–49, 60–80, 89–109, 115–135, 143–163, 185–205, and 206–226; these read FKHV…SFIV, LQNI…SITG, VLIV…VPGF, NINT…YIGI, IKHF…LELI, FVLI…IYFL, and FTLA…IYLK.

The protein belongs to the ATPase A chain family. F-type ATPases have 2 components, CF(1) - the catalytic core - and CF(0) - the membrane proton channel. CF(1) has five subunits: alpha(3), beta(3), gamma(1), delta(1), epsilon(1). CF(0) has three main subunits: a(1), b(2) and c(9-12). The alpha and beta chains form an alternating ring which encloses part of the gamma chain. CF(1) is attached to CF(0) by a central stalk formed by the gamma and epsilon chains, while a peripheral stalk is formed by the delta and b chains.

It is found in the cell inner membrane. In terms of biological role, key component of the proton channel; it plays a direct role in the translocation of protons across the membrane. This Oleidesulfovibrio alaskensis (strain ATCC BAA-1058 / DSM 17464 / G20) (Desulfovibrio alaskensis) protein is ATP synthase subunit a.